The sequence spans 432 residues: Pachytene checkpoint protein 2 homolog (432 aa).

179 to 186 (GPPGTGKT) is a binding site for ATP.

Belongs to the AAA ATPase family. PCH2 subfamily.

In terms of biological role, plays a key role in chromosome recombination and chromosome structure development during meiosis. Required at early steps in meiotic recombination that leads to non-crossovers pathways. Also needed for efficient completion of homologous synapsis by influencing crossover distribution along the chromosomes affecting both crossovers and non-crossovers pathways. The polypeptide is Pachytene checkpoint protein 2 homolog (TRIP13) (Gallus gallus (Chicken)).